Consider the following 443-residue polypeptide: Trigger factor (443 aa).

A PPIase FKBP-type domain is found at 165–250; that stretch reads GDQIVMDFLG…VKEVKKPVPA (86 aa).

It belongs to the FKBP-type PPIase family. Tig subfamily.

The protein localises to the cytoplasm. The enzyme catalyses [protein]-peptidylproline (omega=180) = [protein]-peptidylproline (omega=0). Involved in protein export. Acts as a chaperone by maintaining the newly synthesized protein in an open conformation. Functions as a peptidyl-prolyl cis-trans isomerase. The polypeptide is Trigger factor (Roseobacter denitrificans (strain ATCC 33942 / OCh 114) (Erythrobacter sp. (strain OCh 114))).